A 254-amino-acid polypeptide reads, in one-letter code: Imidazole glycerol phosphate synthase subunit HisF (254 aa).

Active-site residues include Asp14 and Asp133.

This sequence belongs to the HisA/HisF family. As to quaternary structure, heterodimer of HisH and HisF.

It localises to the cytoplasm. The catalysed reaction is 5-[(5-phospho-1-deoxy-D-ribulos-1-ylimino)methylamino]-1-(5-phospho-beta-D-ribosyl)imidazole-4-carboxamide + L-glutamine = D-erythro-1-(imidazol-4-yl)glycerol 3-phosphate + 5-amino-1-(5-phospho-beta-D-ribosyl)imidazole-4-carboxamide + L-glutamate + H(+). Its pathway is amino-acid biosynthesis; L-histidine biosynthesis; L-histidine from 5-phospho-alpha-D-ribose 1-diphosphate: step 5/9. In terms of biological role, IGPS catalyzes the conversion of PRFAR and glutamine to IGP, AICAR and glutamate. The HisF subunit catalyzes the cyclization activity that produces IGP and AICAR from PRFAR using the ammonia provided by the HisH subunit. This Nitratiruptor sp. (strain SB155-2) protein is Imidazole glycerol phosphate synthase subunit HisF.